Reading from the N-terminus, the 151-residue chain is Ribosome maturation factor RimP (151 aa).

Belongs to the RimP family.

Its subcellular location is the cytoplasm. Required for maturation of 30S ribosomal subunits. In Persephonella marina (strain DSM 14350 / EX-H1), this protein is Ribosome maturation factor RimP.